Here is a 641-residue protein sequence, read N- to C-terminus: Vacuolar protein sorting-associated protein 52 (641 aa).

Positions 81–110 form a coiled coil; sequence LTEFTNRLSNYTQDLDFIKKKSNELQSLLE. Ser-602 bears the Phosphoserine mark.

Belongs to the VPS52 family. In terms of assembly, component of the Golgi-associated retrograde protein (GARP) complex, also called VFT (VPS fifty-three) complex, composed of VPS51, VPS52, VPS53 and VPS54. Also interacts with TLG1 and YPT6.

It localises to the golgi apparatus. The protein resides in the trans-Golgi network membrane. The protein localises to the endosome membrane. Its subcellular location is the cytoplasm. It is found in the cytoskeleton. Its function is as follows. Involved in retrograde transport from early and late endosomes to late Golgi by linking the vesicle through the t-SNARE TGL1 to the Golgi, leading to the membrane fusion between late Golgi and endosomal vesicles. May also be involved in the actin cytoskeleton organization. This Saccharomyces cerevisiae (strain ATCC 204508 / S288c) (Baker's yeast) protein is Vacuolar protein sorting-associated protein 52 (VPS52).